A 215-amino-acid chain; its full sequence is Large ribosomal subunit protein bL25 (215 aa).

Residues 192-202 (EEEEVEEEVAE) show a composition bias toward acidic residues. The tract at residues 192–215 (EEEEVEEEVAEPEVIKRKEEEEEE) is disordered. Basic and acidic residues predominate over residues 204–215 (EVIKRKEEEEEE).

Belongs to the bacterial ribosomal protein bL25 family. CTC subfamily. As to quaternary structure, part of the 50S ribosomal subunit; part of the 5S rRNA/L5/L18/L25 subcomplex. Contacts the 5S rRNA. Binds to the 5S rRNA independently of L5 and L18.

Functionally, this is one of the proteins that binds to the 5S RNA in the ribosome where it forms part of the central protuberance. This is Large ribosomal subunit protein bL25 from Thermotoga neapolitana (strain ATCC 49049 / DSM 4359 / NBRC 107923 / NS-E).